Consider the following 769-residue polypeptide: Portal protein (769 aa).

A putative leucine zipper motif region spans residues 458-479 (LEGYVNNLFKTIEGLKDVNSDL). Disordered regions lie at residues 654 to 675 (RGPR…DDER) and 750 to 769 (RQLT…DRRS). Residues 760-769 (VGCERRDRRS) show a composition bias toward basic and acidic residues.

It belongs to the herpesviridae portal protein family. As to quaternary structure, homododecamerizes. Interacts with terminase subunits TRM1 and TRM3.

The protein localises to the virion. It localises to the host nucleus. Functionally, forms a portal in the viral capsid through which viral DNA is translocated during DNA packaging. Assembles as a dodecamer at a single fivefold axe of the T=16 icosahedric capsid. Binds to the molecular motor that translocates the viral DNA, termed terminase. The chain is Portal protein (54) from Homo sapiens (Human).